The following is a 398-amino-acid chain: Nicotinate phosphoribosyltransferase 2 (398 aa).

H224 bears the Phosphohistidine; by autocatalysis mark.

This sequence belongs to the NAPRTase family. Post-translationally, transiently phosphorylated on a His residue during the reaction cycle. Phosphorylation strongly increases the affinity for substrates and increases the rate of nicotinate D-ribonucleotide production. Dephosphorylation regenerates the low-affinity form of the enzyme, leading to product release.

It carries out the reaction nicotinate + 5-phospho-alpha-D-ribose 1-diphosphate + ATP + H2O = nicotinate beta-D-ribonucleotide + ADP + phosphate + diphosphate. It functions in the pathway cofactor biosynthesis; NAD(+) biosynthesis; nicotinate D-ribonucleotide from nicotinate: step 1/1. Functionally, catalyzes the synthesis of beta-nicotinate D-ribonucleotide from nicotinate and 5-phospho-D-ribose 1-phosphate at the expense of ATP. In Pseudomonas aeruginosa (strain ATCC 15692 / DSM 22644 / CIP 104116 / JCM 14847 / LMG 12228 / 1C / PRS 101 / PAO1), this protein is Nicotinate phosphoribosyltransferase 2.